Here is a 260-residue protein sequence, read N- to C-terminus: tRNA pseudouridine synthase C (260 aa).

Asp54 is an active-site residue.

Belongs to the pseudouridine synthase RluA family.

It carries out the reaction uridine(65) in tRNA = pseudouridine(65) in tRNA. Functionally, responsible for synthesis of pseudouridine from uracil-65 in transfer RNAs. The chain is tRNA pseudouridine synthase C (truC) from Salmonella typhi.